We begin with the raw amino-acid sequence, 1790 residues long: Non-reducing polyketide synthase gsfA (1790 aa).

An N-terminal acylcarrier protein transacylase domain (SAT) region spans residues 20–263; it reads GDQRTLFRKL…AMRKIQGMWH (244 aa). The region spanning 392 to 822 is the Ketosynthase family 3 (KS3) domain; sequence SSKIAVVGMS…GGNTAMIIEE (431 aa). Residues Cys563, His698, and His741 each act as for beta-ketoacyl synthase activity in the active site. The tract at residues 922-1223 is malonyl-CoA:ACP transacylase (MAT) domain; that stretch reads FAFAGQGTFY…CSTLHRDSDN (302 aa). A product template (PT) domain region spans residues 1298–1615; sequence TSSIHRLYSE…PRIMLNRFFQ (318 aa). The tract at residues 1302–1435 is N-terminal hotdog fold; sequence HRLYSENYDS…AYYEDPSTWL (134 aa). Residues 1302–1611 enclose the PKS/mFAS DH domain; it reads HRLYSENYDS…FRQWPRIMLN (310 aa). His1334 functions as the Proton acceptor; for dehydratase activity in the catalytic mechanism. The C-terminal hotdog fold stretch occupies residues 1460-1611; it reads MANKLTTSLA…FRQWPRIMLN (152 aa). Asp1518 (proton donor; for dehydratase activity) is an active-site residue. 2 disordered regions span residues 1621–1648 and 1686–1718; these read PPAPRVEKKRDAGRGTLPSSSSLQEKTT and LDYSLLTPRTSPNSDERIEKTDSDSGFEEADGA. Basic and acidic residues predominate over residues 1699–1708; it reads SDERIEKTDS. One can recognise a Carrier domain in the interval 1716-1790; that stretch reads DGANDVTSRA…TIGDLKKLLS (75 aa). O-(pantetheine 4'-phosphoryl)serine is present on Ser1753.

It carries out the reaction 6 malonyl-CoA + acetyl-CoA + 4 H(+) = 2-(2,4-dihydroxy-6-oxidobenzoyl)-5-hydroxy-3-methylbenzenolate + 6 CO2 + 7 CoA + H2O. Its pathway is secondary metabolite biosynthesis; terpenoid biosynthesis. Functionally, norlichexanthone synthase; part of the gene cluster that mediates the biosynthesis of griseofulvin, an important antifungal drug that has been in use for a long time for treating dermatophyte infections. The first step of the pathway is the formation of the heptaketide backbone by gsfA which is initiated by priming with acetyl-CoA, followed by sequential condensations of 6 malonyl-CoA units. The resulting benzophenone can undergo a spontaneous dehydration to form norlichexanthone. However, the true precursor for the griseofulvin biosynthesis is not norlichexanthone, but the heptaketide benzophenone that is O-methylated at 3-OH by gsfB to produce griseophenone D which is further methylated at 9-OH by gsfC to yield griseophenone C. Griseophenone C is then substrate of halogenase gsfI which is responsible for the regio-specific chlorination at the C13 position to form griseophenone B. The cytochrome P450 gsfF catalyzes the coupling of orcinol and phloroglucinol rings in griseophenone B to form desmethyl-dehydrogriseofulvin A which is further methylated at 5-OH by gsfD to yield dehydrogriseofulvin. Finally, gsfE performs stereospecific reduction of enone 18 of dehydrogriseofulvin to afford the final product griseofulvin. In Penicillium aethiopicum, this protein is Non-reducing polyketide synthase gsfA.